Consider the following 307-residue polypeptide: ATP synthase gamma chain (307 aa).

The protein belongs to the ATPase gamma chain family. As to quaternary structure, F-type ATPases have 2 components, CF(1) - the catalytic core - and CF(0) - the membrane proton channel. CF(1) has five subunits: alpha(3), beta(3), gamma(1), delta(1), epsilon(1). CF(0) has three main subunits: a, b and c.

Its subcellular location is the cell membrane. Functionally, produces ATP from ADP in the presence of a proton gradient across the membrane. The gamma chain is believed to be important in regulating ATPase activity and the flow of protons through the CF(0) complex. The sequence is that of ATP synthase gamma chain from Bifidobacterium longum (strain DJO10A).